The primary structure comprises 91 residues: Large ribosomal subunit protein bL27 (91 aa).

Over residues 1–13 the composition is skewed to polar residues; the sequence is MATKKSGGSSCNG. The interval 1 to 20 is disordered; the sequence is MATKKSGGSSCNGRDSRGRR.

The protein belongs to the bacterial ribosomal protein bL27 family.

The sequence is that of Large ribosomal subunit protein bL27 from Anaplasma phagocytophilum (strain HZ).